A 513-amino-acid polypeptide reads, in one-letter code: Probable G-protein coupled receptor Mth-like 9 (513 aa).

The N-terminal stretch at 1–19 is a signal peptide; sequence MVSPLIILLIIWLSVGAKS. The Extracellular segment spans residues 20-207; it reads VEIASINHPC…NCERFQTGYR (188 aa). Intrachain disulfides connect C29/C82, C84/C89, C93/C181, and C94/C107. N36 carries an N-linked (GlcNAc...) asparagine glycan. N-linked (GlcNAc...) asparagine glycans are attached at residues N106, N125, and N165. The chain crosses the membrane as a helical span at residues 208–228; sequence VWIYAICSIIAIIINIFILSL. Residues 229 to 242 lie on the Cytoplasmic side of the membrane; sequence LGSVRDARKSHYGQ. Residues 243–263 form a helical membrane-spanning segment; sequence LIIYYLLSMIVGYSLLVYLAL. Residues 264 to 276 lie on the Extracellular side of the membrane; it reads KNPMKLSHVACRN. The chain crosses the membrane as a helical span at residues 277-297; it reads IGFLAYFCIMLSFVFLAICSL. Topologically, residues 298–314 are cytoplasmic; sequence DFLLKFKQKAVRSSVRR. A helical membrane pass occupies residues 315 to 335; sequence LSLALAVLAVIGLRFLVSLAQ. The Extracellular portion of the chain corresponds to 336–360; it reads DSKLPKHFKPGMGEDYCWFDVRTWG. A helical membrane pass occupies residues 361–381; that stretch reads ILIYYYGPIALLLIFSIVCCL. The Cytoplasmic segment spans residues 382-403; sequence KAYFSIYELPPDTQYILGTQLK. The helical transmembrane segment at 404–424 threads the bilayer; it reads IVKTHFYAFSAYIVGVFAVWI. Residues 425–438 lie on the Extracellular side of the membrane; it reads REIVVYIMARVREH. The chain crosses the membrane as a helical span at residues 439-459; sequence FFIIDFWSGICILGLAIAGFI. At 460-513 the chain is on the cytoplasmic side; that stretch reads LLLGKNLHVKSWWAINVESSQTDLSIINARVYKFDEKGDLKSSDSPYKPTVTSL.

The protein belongs to the G-protein coupled receptor 2 family. Mth subfamily.

The protein resides in the cell membrane. The sequence is that of Probable G-protein coupled receptor Mth-like 9 (mthl9) from Drosophila melanogaster (Fruit fly).